Here is a 161-residue protein sequence, read N- to C-terminus: uncharacterized protein (161 aa).

This is an uncharacterized protein from Mycoplasma (Bacteriophage L2).